An 81-amino-acid chain; its full sequence is Large ribosomal subunit protein bL31 (81 aa).

Positions 16, 18, 38, and 41 each coordinate Zn(2+).

Belongs to the bacterial ribosomal protein bL31 family. Type A subfamily. As to quaternary structure, part of the 50S ribosomal subunit. The cofactor is Zn(2+).

In terms of biological role, binds the 23S rRNA. This Mycobacterium sp. (strain JLS) protein is Large ribosomal subunit protein bL31.